Here is a 179-residue protein sequence, read N- to C-terminus: Large ribosomal subunit protein uL6 (179 aa).

Belongs to the universal ribosomal protein uL6 family. In terms of assembly, part of the 50S ribosomal subunit.

Functionally, this protein binds to the 23S rRNA, and is important in its secondary structure. It is located near the subunit interface in the base of the L7/L12 stalk, and near the tRNA binding site of the peptidyltransferase center. The sequence is that of Large ribosomal subunit protein uL6 from Bifidobacterium longum (strain DJO10A).